Reading from the N-terminus, the 321-residue chain is Putative membrane-bound redox modulator Alx (321 aa).

Over 1-6 (MNTVGT) the chain is Periplasmic. The helical transmembrane segment at 7–27 (PLLWGGFAVVVTIMLAIDLLL) threads the bilayer. Over 28-43 (QGRRGAHAMTMKQAAA) the chain is Cytoplasmic. Residues 44–64 (WSLVWVTLSLLFNAAFWWYLV) form a helical membrane-spanning segment. Residues 65–89 (QTEGRAVADPQALAFLTGYLIEKSL) are Periplasmic-facing. A helical transmembrane segment spans residues 90–110 (AVDNVFVWLMLFSYFSVPAAL). Over 111–113 (QRR) the chain is Cytoplasmic. A helical membrane pass occupies residues 114-134 (VLVYGVLGAIVLRTIMIFTGS). W135 is a topological domain (periplasmic). The helical transmembrane segment at 136-156 (LISQFDWILYIFGAFLLFTGV) threads the bilayer. Residues 157 to 198 (KMALAHEDESGIGDKPLVRWLRGHLRMTDTIDNEHFFVRKNG) are Cytoplasmic-facing. The chain crosses the membrane as a helical span at residues 199–219 (LLYATPLMLVLILVELSDVIF). Topologically, residues 220–225 (AVDSIP) are periplasmic. The chain crosses the membrane as a helical span at residues 226–246 (AIFAVTTDPFIVLTSNLFAIL). At 247 to 261 (GLRAMYFLLAGVAER) the chain is on the cytoplasmic side. A helical transmembrane segment spans residues 262–282 (FSMLKYGLAVILVFIGIKMLI). The Periplasmic segment spans residues 283–286 (VDFY). The helical transmembrane segment at 287–307 (HIPIAVSLGVVFGILVMTFII) threads the bilayer. Topologically, residues 308–321 (NAWVNYRHDKQRVE) are cytoplasmic.

It belongs to the TerC family.

It is found in the cell inner membrane. Has been proposed to be a redox modulator. The sequence is that of Putative membrane-bound redox modulator Alx (alx) from Escherichia coli O6:H1 (strain CFT073 / ATCC 700928 / UPEC).